The sequence spans 207 residues: Small ribosomal subunit protein uS4 (207 aa).

The interval 31–55 is disordered; that stretch reads KCKLDSKPGQHGRTSGARTSDYGTQ. Residues 42 to 53 show a composition bias toward polar residues; it reads GRTSGARTSDYG. One can recognise an S4 RNA-binding domain in the interval 97–160; that stretch reads SRLDNVVYRM…KKQARIVEAL (64 aa).

The protein belongs to the universal ribosomal protein uS4 family. As to quaternary structure, part of the 30S ribosomal subunit. Contacts protein S5. The interaction surface between S4 and S5 is involved in control of translational fidelity.

In terms of biological role, one of the primary rRNA binding proteins, it binds directly to 16S rRNA where it nucleates assembly of the body of the 30S subunit. Functionally, with S5 and S12 plays an important role in translational accuracy. In Burkholderia lata (strain ATCC 17760 / DSM 23089 / LMG 22485 / NCIMB 9086 / R18194 / 383), this protein is Small ribosomal subunit protein uS4.